Consider the following 555-residue polypeptide: T-complex protein 1 subunit gamma (555 aa).

The segment at Lys-527–Asp-555 is disordered.

This sequence belongs to the TCP-1 chaperonin family. Heterooligomeric complex of about 850 to 900 kDa that forms two stacked rings, 12 to 16 nm in diameter. Interacts with CCT8.

The protein resides in the cytoplasm. Molecular chaperone; assists the folding of proteins upon ATP hydrolysis. Known to play a role, in vitro, in the folding of actin and tubulin. This Arabidopsis thaliana (Mouse-ear cress) protein is T-complex protein 1 subunit gamma.